We begin with the raw amino-acid sequence, 302 residues long: Sulfate adenylyltransferase subunit 2 (302 aa).

The tract at residues 280 to 302 (RQGRLIDSDQSASMEQKKRQGYF) is disordered.

This sequence belongs to the PAPS reductase family. CysD subfamily. As to quaternary structure, heterodimer composed of CysD, the smaller subunit, and CysN.

It carries out the reaction sulfate + ATP + H(+) = adenosine 5'-phosphosulfate + diphosphate. It participates in sulfur metabolism; hydrogen sulfide biosynthesis; sulfite from sulfate: step 1/3. With CysN forms the ATP sulfurylase (ATPS) that catalyzes the adenylation of sulfate producing adenosine 5'-phosphosulfate (APS) and diphosphate, the first enzymatic step in sulfur assimilation pathway. APS synthesis involves the formation of a high-energy phosphoric-sulfuric acid anhydride bond driven by GTP hydrolysis by CysN coupled to ATP hydrolysis by CysD. In Shewanella baltica (strain OS195), this protein is Sulfate adenylyltransferase subunit 2.